The sequence spans 327 residues: Biotin synthase (327 aa).

In terms of domain architecture, Radical SAM core spans 44–273 (FMGNKFDTCS…NAFLRFSGGR (230 aa)). 3 residues coordinate [4Fe-4S] cluster: C62, C66, and C69. The [2Fe-2S] cluster site is built by C138, C198, and R268.

It belongs to the radical SAM superfamily. Biotin synthase family. Homodimer. [4Fe-4S] cluster is required as a cofactor. It depends on [2Fe-2S] cluster as a cofactor.

It catalyses the reaction (4R,5S)-dethiobiotin + (sulfur carrier)-SH + 2 reduced [2Fe-2S]-[ferredoxin] + 2 S-adenosyl-L-methionine = (sulfur carrier)-H + biotin + 2 5'-deoxyadenosine + 2 L-methionine + 2 oxidized [2Fe-2S]-[ferredoxin]. It participates in cofactor biosynthesis; biotin biosynthesis; biotin from 7,8-diaminononanoate: step 2/2. In terms of biological role, catalyzes the conversion of dethiobiotin (DTB) to biotin by the insertion of a sulfur atom into dethiobiotin via a radical-based mechanism. The polypeptide is Biotin synthase (Parabacteroides distasonis (strain ATCC 8503 / DSM 20701 / CIP 104284 / JCM 5825 / NCTC 11152)).